The following is a 426-amino-acid chain: D-ribulose kinase (426 aa).

Residues D8, 12–15, S72, and D221 each bind substrate; that span reads SGAR. Residues S243, G281, and 376–380 contribute to the ATP site; that span reads GGAKN.

The protein belongs to the FGGY kinase family. Requires a divalent metal cation as cofactor.

It catalyses the reaction D-ribulose + ATP = D-ribulose 5-phosphate + ADP + H(+). Exhibits ATP hydrolysis without substrate. Phosphorylates D-ribulose. In Synechococcus elongatus (strain ATCC 33912 / PCC 7942 / FACHB-805) (Anacystis nidulans R2), this protein is D-ribulose kinase.